Reading from the N-terminus, the 286-residue chain is uncharacterized protein (286 aa).

A helical transmembrane segment spans residues 8–28 (PLSGFISSLIWWLLFFYLIMA).

To M.jannaschii MJ1495.

Its subcellular location is the membrane. This is an uncharacterized protein from Methanocaldococcus jannaschii (strain ATCC 43067 / DSM 2661 / JAL-1 / JCM 10045 / NBRC 100440) (Methanococcus jannaschii).